The sequence spans 346 residues: [LysW]-lysine/[LysW]-ornithine hydrolase (346 aa).

His68 lines the Zn(2+) pocket. Asp70 is a catalytic residue. Asp92 contributes to the Zn(2+) binding site. Glu122 serves as the catalytic Proton acceptor. The Zn(2+) site is built by Glu123, Glu146, and His317.

It belongs to the peptidase M20A family. LysK subfamily. The cofactor is Zn(2+). Co(2+) serves as cofactor.

It localises to the cytoplasm. The catalysed reaction is [amino-group carrier protein]-C-terminal-gamma-(L-lysyl)-L-glutamate + H2O = [amino-group carrier protein]-C-terminal-L-glutamate + L-lysine. It catalyses the reaction [amino-group carrier protein]-C-terminal-gamma-(L-ornithyl)-L-glutamate + H2O = [amino-group carrier protein]-C-terminal-L-glutamate + L-ornithine. It participates in amino-acid biosynthesis; L-lysine biosynthesis via AAA pathway; L-lysine from L-alpha-aminoadipate (Thermus route): step 5/5. The protein operates within amino-acid biosynthesis; L-arginine biosynthesis. Its function is as follows. Catalyzes the release of L-lysine from [LysW]-gamma-L-lysine and the release of L-ornithine from [LysW]-L-ornithine. The protein is [LysW]-lysine/[LysW]-ornithine hydrolase of Saccharolobus islandicus (strain Y.N.15.51 / Yellowstone #2) (Sulfolobus islandicus).